We begin with the raw amino-acid sequence, 499 residues long: Aspartyl/glutamyl-tRNA(Asn/Gln) amidotransferase subunit B (499 aa).

It belongs to the GatB/GatE family. GatB subfamily. Heterotrimer of A, B and C subunits.

The catalysed reaction is L-glutamyl-tRNA(Gln) + L-glutamine + ATP + H2O = L-glutaminyl-tRNA(Gln) + L-glutamate + ADP + phosphate + H(+). The enzyme catalyses L-aspartyl-tRNA(Asn) + L-glutamine + ATP + H2O = L-asparaginyl-tRNA(Asn) + L-glutamate + ADP + phosphate + 2 H(+). Functionally, allows the formation of correctly charged Asn-tRNA(Asn) or Gln-tRNA(Gln) through the transamidation of misacylated Asp-tRNA(Asn) or Glu-tRNA(Gln) in organisms which lack either or both of asparaginyl-tRNA or glutaminyl-tRNA synthetases. The reaction takes place in the presence of glutamine and ATP through an activated phospho-Asp-tRNA(Asn) or phospho-Glu-tRNA(Gln). The chain is Aspartyl/glutamyl-tRNA(Asn/Gln) amidotransferase subunit B from Bifidobacterium longum (strain DJO10A).